The following is an 87-amino-acid chain: Phosphoribosyl-ATP pyrophosphatase (87 aa).

This sequence belongs to the PRA-PH family.

It is found in the cytoplasm. The catalysed reaction is 1-(5-phospho-beta-D-ribosyl)-ATP + H2O = 1-(5-phospho-beta-D-ribosyl)-5'-AMP + diphosphate + H(+). It participates in amino-acid biosynthesis; L-histidine biosynthesis; L-histidine from 5-phospho-alpha-D-ribose 1-diphosphate: step 2/9. This is Phosphoribosyl-ATP pyrophosphatase from Bifidobacterium animalis subsp. lactis (strain AD011).